The chain runs to 166 residues: SsrA-binding protein (166 aa).

Residues 143–166 (HDKREDDKRKQANRDMKSALARYR) are disordered. Over residues 144–159 (DKREDDKRKQANRDMK) the composition is skewed to basic and acidic residues.

Belongs to the SmpB family.

The protein resides in the cytoplasm. Functionally, required for rescue of stalled ribosomes mediated by trans-translation. Binds to transfer-messenger RNA (tmRNA), required for stable association of tmRNA with ribosomes. tmRNA and SmpB together mimic tRNA shape, replacing the anticodon stem-loop with SmpB. tmRNA is encoded by the ssrA gene; the 2 termini fold to resemble tRNA(Ala) and it encodes a 'tag peptide', a short internal open reading frame. During trans-translation Ala-aminoacylated tmRNA acts like a tRNA, entering the A-site of stalled ribosomes, displacing the stalled mRNA. The ribosome then switches to translate the ORF on the tmRNA; the nascent peptide is terminated with the 'tag peptide' encoded by the tmRNA and targeted for degradation. The ribosome is freed to recommence translation, which seems to be the essential function of trans-translation. The chain is SsrA-binding protein from Prochlorococcus marinus (strain MIT 9211).